The chain runs to 156 residues: MSRKGPSKKHVVLPDPIYGSTVVAQLINKILLDGKKSIAEDIVYSALDMVKEKTEQEPVAVLKRALDNIRPSLEVRSRRVGGATYQVPVEVKPNRANTLSLRWLTDFSRARREKTMAERLANEILDASNGLGASVKRREDTHKMAEANKAFAHYRW.

Belongs to the universal ribosomal protein uS7 family. As to quaternary structure, part of the 30S ribosomal subunit. Contacts proteins S9 and S11.

Functionally, one of the primary rRNA binding proteins, it binds directly to 16S rRNA where it nucleates assembly of the head domain of the 30S subunit. Is located at the subunit interface close to the decoding center, probably blocks exit of the E-site tRNA. This chain is Small ribosomal subunit protein uS7, found in Bifidobacterium longum subsp. infantis (strain ATCC 15697 / DSM 20088 / JCM 1222 / NCTC 11817 / S12).